Here is a 462-residue protein sequence, read N- to C-terminus: Asparagine--tRNA ligase (462 aa).

The protein belongs to the class-II aminoacyl-tRNA synthetase family. In terms of assembly, homodimer.

It is found in the cytoplasm. The catalysed reaction is tRNA(Asn) + L-asparagine + ATP = L-asparaginyl-tRNA(Asn) + AMP + diphosphate + H(+). In Borreliella burgdorferi (strain ATCC 35210 / DSM 4680 / CIP 102532 / B31) (Borrelia burgdorferi), this protein is Asparagine--tRNA ligase.